The following is a 342-amino-acid chain: Glycerol-1-phosphate dehydrogenase [NAD(P)+] (342 aa).

NAD(+) contacts are provided by residues 84–88 (GRPLD) and 106–109 (TSAS). Asp111 lines the substrate pocket. Residue Ser115 coordinates NAD(+). Residue Asp160 coordinates substrate. Residues Asp160 and His241 each coordinate Zn(2+). Residue His245 participates in substrate binding. Residue His260 coordinates Zn(2+).

The protein belongs to the glycerol-1-phosphate dehydrogenase family. Homodimer. The cofactor is Zn(2+).

The protein resides in the cytoplasm. It catalyses the reaction sn-glycerol 1-phosphate + NAD(+) = dihydroxyacetone phosphate + NADH + H(+). The catalysed reaction is sn-glycerol 1-phosphate + NADP(+) = dihydroxyacetone phosphate + NADPH + H(+). Its pathway is membrane lipid metabolism; glycerophospholipid metabolism. In terms of biological role, catalyzes the NAD(P)H-dependent reduction of dihydroxyacetonephosphate (DHAP or glycerone phosphate) to glycerol 1-phosphate (G1P). The G1P thus generated is used as the glycerophosphate backbone of phospholipids in the cellular membranes of Archaea. In Pyrobaculum neutrophilum (strain DSM 2338 / JCM 9278 / NBRC 100436 / V24Sta) (Thermoproteus neutrophilus), this protein is Glycerol-1-phosphate dehydrogenase [NAD(P)+].